Here is a 411-residue protein sequence, read N- to C-terminus: UPF0761 membrane protein PA14_51960 (411 aa).

Transmembrane regions (helical) follow at residues 36–56 (LFAVVPMMTVMFSMLSLIPAF), 92–112 (HLTWVGVVFLAVTAFTMLVTI), 132–152 (FLLYWAILSLGPLLLGAGFAV), 174–194 (LLGLMPLAFSVAAFTLLYSAV), 207–229 (GGVFTAVLFEAAKTLFGLYVSLF), and 244–264 (IFLLWIYLSWMIVLFGAVLVC).

This sequence belongs to the UPF0761 family.

The protein localises to the cell inner membrane. In Pseudomonas aeruginosa (strain UCBPP-PA14), this protein is UPF0761 membrane protein PA14_51960.